We begin with the raw amino-acid sequence, 89 residues long: UPF0237 protein CPE1496 (89 aa).

One can recognise an ACT domain in the interval 4–84; sequence VITVVGKDKV…ISVQHEDIFN (81 aa).

It belongs to the UPF0237 family.

This chain is UPF0237 protein CPE1496, found in Clostridium perfringens (strain 13 / Type A).